Here is a 178-residue protein sequence, read N- to C-terminus: Ribosome maturation factor RimM (178 aa).

Residues aspartate 101–phenylalanine 178 form the PRC barrel domain.

Belongs to the RimM family. Binds ribosomal protein uS19.

It is found in the cytoplasm. An accessory protein needed during the final step in the assembly of 30S ribosomal subunit, possibly for assembly of the head region. Essential for efficient processing of 16S rRNA. May be needed both before and after RbfA during the maturation of 16S rRNA. It has affinity for free ribosomal 30S subunits but not for 70S ribosomes. The chain is Ribosome maturation factor RimM from Pseudomonas fluorescens (strain ATCC BAA-477 / NRRL B-23932 / Pf-5).